Consider the following 258-residue polypeptide: Acetylglutamate kinase (258 aa).

Substrate contacts are provided by residues 44-45 (GG), Arg-66, and Asn-158. ATP contacts are provided by residues 181–186 (DVSGIL) and 209–211 (IIT).

It belongs to the acetylglutamate kinase family. ArgB subfamily. Homodimer.

The protein localises to the cytoplasm. It catalyses the reaction N-acetyl-L-glutamate + ATP = N-acetyl-L-glutamyl 5-phosphate + ADP. It functions in the pathway amino-acid biosynthesis; L-arginine biosynthesis; N(2)-acetyl-L-ornithine from L-glutamate: step 2/4. Catalyzes the ATP-dependent phosphorylation of N-acetyl-L-glutamate. The polypeptide is Acetylglutamate kinase (Shigella dysenteriae serotype 1 (strain Sd197)).